The chain runs to 148 residues: Transcriptional regulator MraZ (148 aa).

SpoVT-AbrB domains are found at residues 5 to 51 and 80 to 123; these read VATV…PLPE and AHDI…NEAR.

It belongs to the MraZ family. Forms oligomers.

Its subcellular location is the cytoplasm. It is found in the nucleoid. This is Transcriptional regulator MraZ from Thiobacillus denitrificans (strain ATCC 25259 / T1).